The sequence spans 63 residues: Large ribosomal subunit protein uL30 (63 aa).

Belongs to the universal ribosomal protein uL30 family. In terms of assembly, part of the 50S ribosomal subunit.

This is Large ribosomal subunit protein uL30 from Caulobacter sp. (strain K31).